The following is a 692-amino-acid chain: Elongation factor G (692 aa).

The tr-type G domain maps to 8 to 282 (EKTRNIGIMA…AVVEYMPAPT (275 aa)). Residues 17-24 (AHIDAGKT), 81-85 (DTPGH), and 135-138 (NKMD) each bind GTP. The interval 285-304 (PNIKGVHPETGEADERHSSD) is disordered. The segment covering 290-304 (VHPETGEADERHSSD) has biased composition (basic and acidic residues).

The protein belongs to the TRAFAC class translation factor GTPase superfamily. Classic translation factor GTPase family. EF-G/EF-2 subfamily.

It localises to the cytoplasm. Catalyzes the GTP-dependent ribosomal translocation step during translation elongation. During this step, the ribosome changes from the pre-translocational (PRE) to the post-translocational (POST) state as the newly formed A-site-bound peptidyl-tRNA and P-site-bound deacylated tRNA move to the P and E sites, respectively. Catalyzes the coordinated movement of the two tRNA molecules, the mRNA and conformational changes in the ribosome. This Desulfitobacterium hafniense (strain DSM 10664 / DCB-2) protein is Elongation factor G.